Consider the following 322-residue polypeptide: Tetraacyldisaccharide 4'-kinase (322 aa).

54-61 (SVGGTGKT) lines the ATP pocket.

The protein belongs to the LpxK family.

It carries out the reaction a lipid A disaccharide + ATP = a lipid IVA + ADP + H(+). It participates in glycolipid biosynthesis; lipid IV(A) biosynthesis; lipid IV(A) from (3R)-3-hydroxytetradecanoyl-[acyl-carrier-protein] and UDP-N-acetyl-alpha-D-glucosamine: step 6/6. In terms of biological role, transfers the gamma-phosphate of ATP to the 4'-position of a tetraacyldisaccharide 1-phosphate intermediate (termed DS-1-P) to form tetraacyldisaccharide 1,4'-bis-phosphate (lipid IVA). The sequence is that of Tetraacyldisaccharide 4'-kinase from Francisella tularensis subsp. tularensis (strain FSC 198).